Reading from the N-terminus, the 530-residue chain is 3-oxo-5-alpha-steroid 4-dehydrogenase (530 aa).

An FAD-binding site is contributed by 33-62 (DVVVVGWGGAGASAAIEAREQGAEVLVIER). A helical membrane pass occupies residues 395–415 (AWQCLFGGLWAFQSMPALALM).

It belongs to the FAD-dependent oxidoreductase 2 family. Requires FAD as cofactor.

The protein localises to the membrane. The catalysed reaction is a 3-oxo-5alpha-steroid + A = a 3-oxo-Delta(4)-steroid + AH2. The enzyme catalyses 5alpha-androstan-3,17-dione + A = androst-4-ene-3,17-dione + AH2. It catalyses the reaction 5alpha-androst-1-ene-3,17-dione + A = androsta-1,4-diene-3,17-dione + AH2. Inhibition occurs with substrate concentrations above 25 uM. In terms of biological role, involved in the degradation of steroids having an A:B ring fusion in a trans configuration. Catalyzes the elimination of hydrogens located at positions 4 and 5 and the introduction of double bonds into ring A. This Comamonas testosteroni (Pseudomonas testosteroni) protein is 3-oxo-5-alpha-steroid 4-dehydrogenase.